Here is a 103-residue protein sequence, read N- to C-terminus: Small ribosomal subunit protein uS10 (103 aa).

Belongs to the universal ribosomal protein uS10 family. As to quaternary structure, part of the 30S ribosomal subunit.

Functionally, involved in the binding of tRNA to the ribosomes. In Vibrio campbellii (strain ATCC BAA-1116), this protein is Small ribosomal subunit protein uS10.